The chain runs to 222 residues: MNEELSTFFYVPVGTMMLAIAFPAILLPTPNRLITNRWITIQQWLIQLIMKQLLSIHNTKGLSWSLMLITLTLFIGLTNLLGLLPYSFAPTTQLTVNLSMAIPLWTGTVVPGFRYKTKISLAHLLPQGTPMFLIPMIIIIETISLLIRPVTLAVRLTANITAGHSLIHLTGTATLTLSSIHSMTITVTFVTVILLTILELAVALIQAYVFALLISLYLHENA.

Transmembrane regions (helical) follow at residues 8-28 (FFYV…ILLP), 64-84 (WSLM…LGLL), 93-113 (QLTV…VPGF), 127-147 (QGTP…SLLI), 160-180 (ITAG…LSSI), and 197-219 (ILEL…LYLH).

Belongs to the ATPase A chain family. In terms of assembly, component of the ATP synthase complex composed at least of ATP5F1A/subunit alpha, ATP5F1B/subunit beta, ATP5MC1/subunit c (homooctomer), MT-ATP6/subunit a, MT-ATP8/subunit 8, ATP5ME/subunit e, ATP5MF/subunit f, ATP5MG/subunit g, ATP5MK/subunit k, ATP5MJ/subunit j, ATP5F1C/subunit gamma, ATP5F1D/subunit delta, ATP5F1E/subunit epsilon, ATP5PF/subunit F6, ATP5PB/subunit b, ATP5PD/subunit d, ATP5PO/subunit OSCP. ATP synthase complex consists of a soluble F(1) head domain (subunits alpha(3) and beta(3)) - the catalytic core - and a membrane F(0) domain - the membrane proton channel (subunits c, a, 8, e, f, g, k and j). These two domains are linked by a central stalk (subunits gamma, delta, and epsilon) rotating inside the F1 region and a stationary peripheral stalk (subunits F6, b, d, and OSCP). Interacts with DNAJC30; interaction is direct.

The protein localises to the mitochondrion inner membrane. It catalyses the reaction H(+)(in) = H(+)(out). Functionally, subunit a, of the mitochondrial membrane ATP synthase complex (F(1)F(0) ATP synthase or Complex V) that produces ATP from ADP in the presence of a proton gradient across the membrane which is generated by electron transport complexes of the respiratory chain. ATP synthase complex consist of a soluble F(1) head domain - the catalytic core - and a membrane F(1) domain - the membrane proton channel. These two domains are linked by a central stalk rotating inside the F(1) region and a stationary peripheral stalk. During catalysis, ATP synthesis in the catalytic domain of F(1) is coupled via a rotary mechanism of the central stalk subunits to proton translocation. With the subunit c (ATP5MC1), forms the proton-conducting channel in the F(0) domain, that contains two crucial half-channels (inlet and outlet) that facilitate proton movement from the mitochondrial intermembrane space (IMS) into the matrix. Protons are taken up via the inlet half-channel and released through the outlet half-channel, following a Grotthuss mechanism. This chain is ATP synthase F(0) complex subunit a, found in Loxodonta africana (African elephant).